Here is a 568-residue protein sequence, read N- to C-terminus: Protein downstream neighbor of son homolog (568 aa).

Disordered regions lie at residues 28–48 (NKLA…QVDE) and 311–355 (MPLK…DDDE). The segment covering 315 to 335 (SDNSGNAHDNSFNEESTTTSL) has biased composition (polar residues).

Belongs to the DONSON family. As to expression, expression peaks during late G1 and S phase (at protein level).

The protein localises to the nucleus. Essential for DNA amplification in the ovary and required for cell proliferation during development. This is Protein downstream neighbor of son homolog (hd) from Drosophila melanogaster (Fruit fly).